The sequence spans 68 residues: Copper transport protein ATOX1 (68 aa).

An HMA domain is found at 1–63 (MPKHEFSVDM…TLGKTGKAVS (63 aa)). The Cu cation site is built by cysteine 12 and cysteine 15. Residue serine 47 is modified to Phosphoserine. Lysine 60 bears the N6-acetyllysine mark.

This sequence belongs to the ATX1 family. Homodimer. Interacts with ATP7B. Interacts with ATP7A. Interacts (via dimer form) with SLC31A1 (via C-terminal domain); this interaction improves ATOX1 stability and controls intracellular Cu(I) levels.

Binds and deliver cytosolic copper to the copper ATPase proteins. May be important in cellular antioxidant defense. The chain is Copper transport protein ATOX1 from Bos taurus (Bovine).